Consider the following 130-residue polypeptide: Small ribosomal subunit protein uS8 (130 aa).

Belongs to the universal ribosomal protein uS8 family. As to quaternary structure, part of the 30S ribosomal subunit. Contacts proteins S5 and S12.

One of the primary rRNA binding proteins, it binds directly to 16S rRNA central domain where it helps coordinate assembly of the platform of the 30S subunit. The protein is Small ribosomal subunit protein uS8 of Teredinibacter turnerae (strain ATCC 39867 / T7901).